The following is a 990-amino-acid chain: Mediator of RNA polymerase II transcription subunit 5 (990 aa).

Belongs to the Mediator complex subunit 5 family. Component of the Mediator complex.

It localises to the nucleus. Functionally, component of the Mediator complex, a coactivator involved in the regulated transcription of nearly all RNA polymerase II-dependent genes. Mediator functions as a bridge to convey information from gene-specific regulatory proteins to the basal RNA polymerase II transcription machinery. Mediator is recruited to promoters by direct interactions with regulatory proteins and serves as a scaffold for the assembly of a functional preinitiation complex with RNA polymerase II and the general transcription factors. The chain is Mediator of RNA polymerase II transcription subunit 5 (NUT1) from Debaryomyces hansenii (strain ATCC 36239 / CBS 767 / BCRC 21394 / JCM 1990 / NBRC 0083 / IGC 2968) (Yeast).